Here is a 77-residue protein sequence, read N- to C-terminus: NAD(P)H-quinone oxidoreductase subunit L (77 aa).

Transmembrane regions (helical) follow at residues 10–30 (LLIA…LPAG) and 48–68 (LVMY…SPFL).

Belongs to the complex I NdhL subunit family. As to quaternary structure, NDH-1 can be composed of about 15 different subunits; different subcomplexes with different compositions have been identified which probably have different functions.

The protein localises to the cellular thylakoid membrane. The catalysed reaction is a plastoquinone + NADH + (n+1) H(+)(in) = a plastoquinol + NAD(+) + n H(+)(out). The enzyme catalyses a plastoquinone + NADPH + (n+1) H(+)(in) = a plastoquinol + NADP(+) + n H(+)(out). In terms of biological role, NDH-1 shuttles electrons from an unknown electron donor, via FMN and iron-sulfur (Fe-S) centers, to quinones in the respiratory and/or the photosynthetic chain. The immediate electron acceptor for the enzyme in this species is believed to be plastoquinone. Couples the redox reaction to proton translocation, and thus conserves the redox energy in a proton gradient. Cyanobacterial NDH-1 also plays a role in inorganic carbon-concentration. In Picosynechococcus sp. (strain ATCC 27264 / PCC 7002 / PR-6) (Agmenellum quadruplicatum), this protein is NAD(P)H-quinone oxidoreductase subunit L.